A 246-amino-acid chain; its full sequence is Mast cell protease 9 (246 aa).

The signal sequence occupies residues 1–18 (MQALLFLMALLLPSRAGA). A propeptide spans 19–20 (EE) (activation peptide). One can recognise a Peptidase S1 domain in the interval 21 to 244 (IIGGVESEPH…HVPWINRVIK (224 aa)). A disulfide bridge connects residues C50 and C66. Catalysis depends on charge relay system residues H65 and D109. 2 disulfide bridges follow: C143/C208 and C174/C187. S202 (charge relay system) is an active-site residue.

It belongs to the peptidase S1 family. Granzyme subfamily. Selectively expressed in uterine mast cells.

In Mus musculus (Mouse), this protein is Mast cell protease 9 (Mcpt9).